Reading from the N-terminus, the 233-residue chain is Probable septum site-determining protein MinC (233 aa).

The tract at residues L98–Q123 is disordered. Residues R107–V120 show a composition bias toward pro residues.

It belongs to the MinC family. As to quaternary structure, interacts with MinD and FtsZ.

Functionally, cell division inhibitor that blocks the formation of polar Z ring septums. Rapidly oscillates between the poles of the cell to destabilize FtsZ filaments that have formed before they mature into polar Z rings. Prevents FtsZ polymerization. This is Probable septum site-determining protein MinC from Klebsiella pneumoniae (strain 342).